The sequence spans 232 residues: MKKNLQIAIDGPAGAGKSTIAKAIARQLGFFYVDTGAMYRAIAYKALRLNIALTQEEEIAGMARQTEITLEHSAARRVFCDGLDVTEAIRSPEVSRSVSIIAAYPEVRERLVELQRQEAGQGGVVMDGRDIGTYVLPDADLKIFLTASSEERARRRWLELQRAGKELSLAEVQRDMDARDHYDQQRAVSPLIPAADAILLDTTGLQIEEIVDRILSLFNDKVETGYVRSQNQ.

11-19 (GPAGAGKST) is a binding site for ATP.

Belongs to the cytidylate kinase family. Type 1 subfamily.

The protein localises to the cytoplasm. It catalyses the reaction CMP + ATP = CDP + ADP. The catalysed reaction is dCMP + ATP = dCDP + ADP. The chain is Cytidylate kinase from Desulfitobacterium hafniense (strain Y51).